We begin with the raw amino-acid sequence, 381 residues long: Erythronate-4-phosphate dehydrogenase (381 aa).

Substrate is bound by residues S45 and T67. Residues D148, A207–R209, and D233 each bind NAD(+). The active site involves R209. The active site involves E238. The active-site Proton donor is H255. G258 contacts NAD(+).

This sequence belongs to the D-isomer specific 2-hydroxyacid dehydrogenase family. PdxB subfamily. Homodimer.

It localises to the cytoplasm. The enzyme catalyses 4-phospho-D-erythronate + NAD(+) = (R)-3-hydroxy-2-oxo-4-phosphooxybutanoate + NADH + H(+). Its pathway is cofactor biosynthesis; pyridoxine 5'-phosphate biosynthesis; pyridoxine 5'-phosphate from D-erythrose 4-phosphate: step 2/5. Its function is as follows. Catalyzes the oxidation of erythronate-4-phosphate to 3-hydroxy-2-oxo-4-phosphonooxybutanoate. This is Erythronate-4-phosphate dehydrogenase from Idiomarina loihiensis (strain ATCC BAA-735 / DSM 15497 / L2-TR).